Consider the following 231-residue polypeptide: Biosynthetic peptidoglycan transglycosylase (231 aa).

A helical transmembrane segment spans residues 7–27 (LLFWLILVPILLVLLMQLYFF).

This sequence belongs to the glycosyltransferase 51 family.

The protein resides in the cell inner membrane. It carries out the reaction [GlcNAc-(1-&gt;4)-Mur2Ac(oyl-L-Ala-gamma-D-Glu-L-Lys-D-Ala-D-Ala)](n)-di-trans,octa-cis-undecaprenyl diphosphate + beta-D-GlcNAc-(1-&gt;4)-Mur2Ac(oyl-L-Ala-gamma-D-Glu-L-Lys-D-Ala-D-Ala)-di-trans,octa-cis-undecaprenyl diphosphate = [GlcNAc-(1-&gt;4)-Mur2Ac(oyl-L-Ala-gamma-D-Glu-L-Lys-D-Ala-D-Ala)](n+1)-di-trans,octa-cis-undecaprenyl diphosphate + di-trans,octa-cis-undecaprenyl diphosphate + H(+). It functions in the pathway cell wall biogenesis; peptidoglycan biosynthesis. Peptidoglycan polymerase that catalyzes glycan chain elongation from lipid-linked precursors. The protein is Biosynthetic peptidoglycan transglycosylase of Herminiimonas arsenicoxydans.